The primary structure comprises 287 residues: Homoserine kinase (287 aa).

ATP is bound at residue 78–88 (PLSRGLGSSST).

This sequence belongs to the GHMP kinase family. Homoserine kinase subfamily.

It is found in the cytoplasm. The enzyme catalyses L-homoserine + ATP = O-phospho-L-homoserine + ADP + H(+). Its pathway is amino-acid biosynthesis; L-threonine biosynthesis; L-threonine from L-aspartate: step 4/5. Functionally, catalyzes the ATP-dependent phosphorylation of L-homoserine to L-homoserine phosphate. The chain is Homoserine kinase from Lactobacillus gasseri (strain ATCC 33323 / DSM 20243 / BCRC 14619 / CIP 102991 / JCM 1131 / KCTC 3163 / NCIMB 11718 / NCTC 13722 / AM63).